Consider the following 137-residue polypeptide: Ribosome-binding factor A (137 aa).

Belongs to the RbfA family. As to quaternary structure, monomer. Binds 30S ribosomal subunits, but not 50S ribosomal subunits or 70S ribosomes.

It is found in the cytoplasm. One of several proteins that assist in the late maturation steps of the functional core of the 30S ribosomal subunit. Associates with free 30S ribosomal subunits (but not with 30S subunits that are part of 70S ribosomes or polysomes). Required for efficient processing of 16S rRNA. May interact with the 5'-terminal helix region of 16S rRNA. This Rhodopseudomonas palustris (strain BisB18) protein is Ribosome-binding factor A.